We begin with the raw amino-acid sequence, 431 residues long: Histidinol dehydrogenase (431 aa).

Tyr127, Gln185, and Asn208 together coordinate NAD(+). Substrate contacts are provided by Ser234, Gln256, and His259. Residues Gln256 and His259 each coordinate Zn(2+). Residues Glu323 and His324 each act as proton acceptor in the active site. Substrate is bound by residues His324, Asp357, Glu411, and His416. Position 357 (Asp357) interacts with Zn(2+). His416 contributes to the Zn(2+) binding site.

Belongs to the histidinol dehydrogenase family. Zn(2+) serves as cofactor.

It carries out the reaction L-histidinol + 2 NAD(+) + H2O = L-histidine + 2 NADH + 3 H(+). The protein operates within amino-acid biosynthesis; L-histidine biosynthesis; L-histidine from 5-phospho-alpha-D-ribose 1-diphosphate: step 9/9. Catalyzes the sequential NAD-dependent oxidations of L-histidinol to L-histidinaldehyde and then to L-histidine. The chain is Histidinol dehydrogenase from Vibrio vulnificus (strain CMCP6).